A 110-amino-acid chain; its full sequence is Ribonuclease P protein component (110 aa).

It belongs to the RnpA family. Consists of a catalytic RNA component (M1 or rnpB) and a protein subunit.

The catalysed reaction is Endonucleolytic cleavage of RNA, removing 5'-extranucleotides from tRNA precursor.. Functionally, RNaseP catalyzes the removal of the 5'-leader sequence from pre-tRNA to produce the mature 5'-terminus. It can also cleave other RNA substrates such as 4.5S RNA. The protein component plays an auxiliary but essential role in vivo by binding to the 5'-leader sequence and broadening the substrate specificity of the ribozyme. The protein is Ribonuclease P protein component of Mesoplasma florum (strain ATCC 33453 / NBRC 100688 / NCTC 11704 / L1) (Acholeplasma florum).